Here is an 88-residue protein sequence, read N- to C-terminus: Small ribosomal subunit protein bS18A (88 aa).

The protein belongs to the bacterial ribosomal protein bS18 family. Part of the 30S ribosomal subunit. Forms a tight heterodimer with protein bS6.

Functionally, binds as a heterodimer with protein bS6 to the central domain of the 16S rRNA, where it helps stabilize the platform of the 30S subunit. This Mycolicibacterium gilvum (strain PYR-GCK) (Mycobacterium gilvum (strain PYR-GCK)) protein is Small ribosomal subunit protein bS18A.